A 169-amino-acid polypeptide reads, in one-letter code: Probable chorismate pyruvate-lyase (169 aa).

Positions 71, 110, and 150 each coordinate substrate.

The protein belongs to the UbiC family.

It localises to the cytoplasm. The enzyme catalyses chorismate = 4-hydroxybenzoate + pyruvate. It functions in the pathway cofactor biosynthesis; ubiquinone biosynthesis. Removes the pyruvyl group from chorismate, with concomitant aromatization of the ring, to provide 4-hydroxybenzoate (4HB) for the ubiquinone pathway. The polypeptide is Probable chorismate pyruvate-lyase (Acinetobacter baumannii (strain ATCC 17978 / DSM 105126 / CIP 53.77 / LMG 1025 / NCDC KC755 / 5377)).